Reading from the N-terminus, the 288-residue chain is Probable coatomer subunit epsilon (288 aa).

At serine 262 the chain carries Phosphoserine.

Belongs to the COPE family. As to quaternary structure, oligomeric complex that consists of at least the alpha, beta, beta', gamma, delta, epsilon and zeta subunits.

It is found in the cytoplasm. The protein localises to the golgi apparatus membrane. It localises to the cytoplasmic vesicle. Its subcellular location is the COPI-coated vesicle membrane. The coatomer is a cytosolic protein complex that binds to dilysine motifs and reversibly associates with Golgi non-clathrin-coated vesicles, which further mediate biosynthetic protein transport from the ER, via the Golgi up to the trans Golgi network. The coatomer complex is required for budding from Golgi membranes, and is essential for the retrograde Golgi-to-ER transport of dilysine-tagged proteins. The chain is Probable coatomer subunit epsilon (sec28) from Schizosaccharomyces pombe (strain 972 / ATCC 24843) (Fission yeast).